The following is a 359-amino-acid chain: tRNA-specific 2-thiouridylase MnmA (359 aa).

Residues Gly-9–Ser-16 and Met-35 each bind ATP. The active-site Nucleophile is Cys-104. The cysteines at positions 104 and 200 are disulfide-linked. An ATP-binding site is contributed by Gly-128. The interaction with tRNA stretch occupies residues Lys-150–Gln-152. Cys-200 (cysteine persulfide intermediate) is an active-site residue. Residues Arg-306–Tyr-307 form an interaction with tRNA region.

This sequence belongs to the MnmA/TRMU family.

The protein localises to the cytoplasm. The enzyme catalyses S-sulfanyl-L-cysteinyl-[protein] + uridine(34) in tRNA + AH2 + ATP = 2-thiouridine(34) in tRNA + L-cysteinyl-[protein] + A + AMP + diphosphate + H(+). Functionally, catalyzes the 2-thiolation of uridine at the wobble position (U34) of tRNA, leading to the formation of s(2)U34. The polypeptide is tRNA-specific 2-thiouridylase MnmA (Clostridium perfringens (strain ATCC 13124 / DSM 756 / JCM 1290 / NCIMB 6125 / NCTC 8237 / Type A)).